We begin with the raw amino-acid sequence, 1958 residues long: Probable Rho GTPase-activating protein CG5521 (1958 aa).

Disordered regions lie at residues 1–21 (MFTK…QDSK), 400–424 (PPFL…RSQR), and 635–804 (GSVW…GIEG). Residues 400–414 (PPFLLEPNDDPPPPS) are compositionally biased toward pro residues. The span at 640-656 (GSGSNSAANGGSAASAA) shows a compositional bias: low complexity. Residues Ser-718, Ser-764, and Ser-767 each carry the phosphoserine modification. Basic and acidic residues predominate over residues 758–774 (DLRRAMSLDSLARKGDA). The span at 775-785 (EETDSYQEGDN) shows a compositional bias: acidic residues. Residues Ser-787, Ser-791, Ser-793, and Ser-795 each carry the phosphoserine modification. Positions 788-800 (GAGSRSPSPTASS) are enriched in polar residues. Tyr-980 carries the post-translational modification Phosphotyrosine. The segment at 1534-1568 (HSTQAPSPALRHASSNSSLQQPDQRSLHSTTASFD) is disordered. The segment covering 1546 to 1568 (ASSNSSLQQPDQRSLHSTTASFD) has biased composition (polar residues). The residue at position 1551 (Ser-1551) is a Phosphoserine. In terms of domain architecture, Rap-GAP spans 1612–1819 (LRNVDLQKCR…EERNRSLDSV (208 aa)). Residues 1903–1958 (ATGMSSASPRGPRKLGAPFKSVTKKHSLQHIAVGGGAGAGGDTPPESPTLPQRRFK) are disordered. Thr-1945 is subject to Phosphothreonine. Residue Ser-1949 is modified to Phosphoserine.

The sequence is that of Probable Rho GTPase-activating protein CG5521 from Drosophila melanogaster (Fruit fly).